The following is a 328-amino-acid chain: MGLLRRRLLLLVVVVTTCVPASQGLRCIQCESNQDCLVEECALGQDLCRTTVLREWEDAEELEVVTRGCAHKEKTNRTMSYRMGSVIVSLTETVCATNLCNRPRPGARGRPFPRGRYLECASCTSLDQSCERGREQSLQCRYPTEHCIEVVTLQSTERSVKDEPYTKGCGSLPGCPGTAGFHSNQTFHFLKCCNFTQCNGGPVLDLQSLPPNGFQCYSCEGNSTFGCSYEETSLIDCRGPMNQCLEATGLDVLGNRSYTVRGCATASWCQGSHVADSFQTHVNLSISCCNGSGCNRPTGGAPGPGPAHLILIASLLLTLRLWGIPLWT.

The N-terminal stretch at 1-24 (MGLLRRRLLLLVVVVTTCVPASQG) is a signal peptide. UPAR/Ly6 domains follow at residues 25–118 (LRCI…GRYL), 118–213 (LECA…PPNG), and 214–299 (FQCY…RPTG). Intrachain disulfides connect Cys-27–Cys-48, Cys-30–Cys-36, and Cys-41–Cys-69. Asn-76 carries an N-linked (GlcNAc...) asparagine glycan. 11 disulfides stabilise this stretch: Cys-95–Cys-100, Cys-120–Cys-147, Cys-123–Cys-130, Cys-140–Cys-169, Cys-175–Cys-192, Cys-193–Cys-198, Cys-216–Cys-244, Cys-219–Cys-227, Cys-237–Cys-263, Cys-269–Cys-288, and Cys-289–Cys-294. Asn-184, Asn-194, Asn-222, Asn-255, Asn-283, and Asn-290 each carry an N-linked (GlcNAc...) asparagine glycan. The GPI-anchor amidated glycine moiety is linked to residue Gly-299. Positions 300-328 (GAPGPGPAHLILIASLLLTLRLWGIPLWT) are cleaved as a propeptide — removed in mature form.

Monomer. Interacts (via the UPAR/Ly6 domains) with SRPX2. Interacts with MRC2. Interacts with SORL1 (via N-terminal ectodomain); this interaction decreases PLAUR internalization. The ternary complex composed of PLAUR-PLAU-SERPINE1 also interacts with SORL1. Interacts with CD82; this interaction prevents PLAUR from binding to its high affinity ligand PLAU.

It is found in the cell membrane. Its subcellular location is the secreted. Its function is as follows. Acts as a receptor for urokinase plasminogen activator. Plays a role in localizing and promoting plasmin formation. Mediates the proteolysis-independent signal transduction activation effects of U-PA. The sequence is that of Urokinase plasminogen activator surface receptor (Plaur) from Rattus norvegicus (Rat).